The sequence spans 127 residues: Protein yippee-like 4 (127 aa).

The Yippee domain maps to 27 to 124; sequence RTYSCVHCRA…IEMSHMVKDN (98 aa). 4 residues coordinate Zn(2+): Cys-31, Cys-34, Cys-87, and Cys-90. 2 positions are modified to phosphothreonine: Thr-92 and Thr-93. Tyr-98 is subject to Phosphotyrosine.

It belongs to the yippee family.

It is found in the nucleus. The protein resides in the nucleolus. In Chlorocebus aethiops (Green monkey), this protein is Protein yippee-like 4 (YPEL4).